Here is a 300-residue protein sequence, read N- to C-terminus: Cation-efflux pump FieF (300 aa).

4 helical membrane passes run 12-32 (AAIA…FAWW), 39-59 (ILAA…NLLV), 82-102 (AALA…LTGI), and 114-134 (PGVG…LVSF). Positions 45 and 49 each coordinate Zn(2+). Residues His153 and Asp157 each contribute to the Zn(2+) site. Helical transmembrane passes span 156 to 176 (SDVM…YGWH) and 178 to 198 (ADAL…LRMG).

It belongs to the cation diffusion facilitator (CDF) transporter (TC 2.A.4) family. FieF subfamily. In terms of assembly, homodimer.

Its subcellular location is the cell inner membrane. It carries out the reaction Zn(2+)(in) + H(+)(out) = Zn(2+)(out) + H(+)(in). It catalyses the reaction Cd(2+)(in) + H(+)(out) = Cd(2+)(out) + H(+)(in). The enzyme catalyses Fe(2+)(in) + H(+)(out) = Fe(2+)(out) + H(+)(in). In terms of biological role, divalent metal cation transporter which exports Zn(2+), Cd(2+) and possibly Fe(2+). May be involved in zinc and iron detoxification by efflux. The chain is Cation-efflux pump FieF from Escherichia coli O157:H7 (strain EC4115 / EHEC).